The following is a 350-amino-acid chain: Phenylalanine--tRNA ligase alpha subunit (350 aa).

E262 serves as a coordination point for Mg(2+).

It belongs to the class-II aminoacyl-tRNA synthetase family. Phe-tRNA synthetase alpha subunit type 1 subfamily. In terms of assembly, tetramer of two alpha and two beta subunits. It depends on Mg(2+) as a cofactor.

The protein localises to the cytoplasm. It carries out the reaction tRNA(Phe) + L-phenylalanine + ATP = L-phenylalanyl-tRNA(Phe) + AMP + diphosphate + H(+). The chain is Phenylalanine--tRNA ligase alpha subunit from Thermus thermophilus (strain ATCC BAA-163 / DSM 7039 / HB27).